A 346-amino-acid polypeptide reads, in one-letter code: Heparan sulfate glucosamine 3-O-sulfotransferase 5 (346 aa).

At 1 to 12 (MLFKQQVWLRQK) the chain is on the cytoplasmic side. The helical; Signal-anchor for type II membrane protein transmembrane segment at 13–32 (LLVLGSLAVGSLLYLVARVG) threads the bilayer. Residues 33–346 (SLDRLQPICP…QITGRTLNWP (314 aa)) are Lumenal-facing. Asn-75 is a glycosylation site (N-linked (GlcNAc...) asparagine). 100–104 (KGGTR) lines the 3'-phosphoadenylyl sulfate pocket. Residues 122–128 (EIHFFDN) and 155–158 (KSPA) each bind substrate. Asn-173 is a glycosylation site (N-linked (GlcNAc...) asparagine). Arg-183 and Ser-191 together coordinate 3'-phosphoadenylyl sulfate. A glycan (N-linked (GlcNAc...) asparagine) is linked at Asn-204. 226-227 (YK) provides a ligand contact to substrate. N-linked (GlcNAc...) asparagine glycosylation is present at Asn-287. Tyr-293 provides a ligand contact to 3'-phosphoadenylyl sulfate. The cysteines at positions 294 and 304 are disulfide-linked. 309–313 (KGRIH) is a 3'-phosphoadenylyl sulfate binding site.

Belongs to the sulfotransferase 1 family.

The protein localises to the golgi apparatus membrane. The catalysed reaction is alpha-D-glucosaminyl-[heparan sulfate](n) + 3'-phosphoadenylyl sulfate = 3-sulfo-alpha-D-glucosaminyl-[heparan sulfate](n) + adenosine 3',5'-bisphosphate + H(+). Functionally, sulfotransferase that utilizes 3'-phospho-5'-adenylyl sulfate (PAPS) to catalyze the transfer of a sulfo group to position 3 of glucosamine residues in heparan. Catalyzes the rate limiting step in the biosynthesis of heparan sulfate (HSact). This modification is a crucial step in the biosynthesis of anticoagulant heparan sulfate as it completes the structure of the antithrombin pentasaccharide binding site. Also generates GlcUA-GlcNS or IdoUA-GlcNS and IdoUA2S-GlcNH2. This Mus musculus (Mouse) protein is Heparan sulfate glucosamine 3-O-sulfotransferase 5 (Hs3st5).